The chain runs to 326 residues: MIIRAVPVGIGHYLPERVVPNAEFEAMEGLETSDEWIRARSGIERRHFAAEGETTSQMAVTAARKALDHAALNPDDIDAVIVATSTPDLTFPSVATMVQAGLGMTGGFAFDVQAVCAGFVYALANANALIVSGQANRVLVIGAETFSRIMDWTDRTTCVLFGDGAGALILEGRDSAGTPQDRGILSTDLHSDGTHRELLYVDGGVSSTGTTGVLKMQGKEVFRHAIEKLTKTADTGLAKAGVTVGDVDWVVPHQANIRIISGTVKKFGLPMDKVIVTVQDHGNTSAASIPLAMSVGVGDGRIQPGHLLVTEAIGGGLAWGAVVMRW.

Residues Cys-116 and His-253 contribute to the active site. The segment at Gln-254–Arg-258 is ACP-binding. The active site involves Asn-283.

The protein belongs to the thiolase-like superfamily. FabH family. As to quaternary structure, homodimer.

The protein localises to the cytoplasm. The catalysed reaction is malonyl-[ACP] + acetyl-CoA + H(+) = 3-oxobutanoyl-[ACP] + CO2 + CoA. Its pathway is lipid metabolism; fatty acid biosynthesis. Its function is as follows. Catalyzes the condensation reaction of fatty acid synthesis by the addition to an acyl acceptor of two carbons from malonyl-ACP. Catalyzes the first condensation reaction which initiates fatty acid synthesis and may therefore play a role in governing the total rate of fatty acid production. Possesses both acetoacetyl-ACP synthase and acetyl transacylase activities. Its substrate specificity determines the biosynthesis of branched-chain and/or straight-chain of fatty acids. The protein is Beta-ketoacyl-[acyl-carrier-protein] synthase III of Jannaschia sp. (strain CCS1).